The chain runs to 163 residues: Transcriptional repressor NrdR (163 aa).

The segment at 3–34 is a zinc-finger region; the sequence is CVQCGHLEDKVIDSRMSKDGTTIRRRRVCLRC. Residues 49-139 form the ATP-cone domain; that stretch reads LRVVKRDNLR…VYRQFSNVEE (91 aa).

The protein belongs to the NrdR family. Zn(2+) serves as cofactor.

Negatively regulates transcription of bacterial ribonucleotide reductase nrd genes and operons by binding to NrdR-boxes. This chain is Transcriptional repressor NrdR, found in Akkermansia muciniphila (strain ATCC BAA-835 / DSM 22959 / JCM 33894 / BCRC 81048 / CCUG 64013 / CIP 107961 / Muc).